The sequence spans 84 residues: Large ribosomal subunit protein bL27 (84 aa).

The segment at 1-21 (MAHKKGGGSTKNGRDSNPKYL) is disordered.

This sequence belongs to the bacterial ribosomal protein bL27 family.

The chain is Large ribosomal subunit protein bL27 from Chlorobium limicola (strain DSM 245 / NBRC 103803 / 6330).